The primary structure comprises 364 residues: Dual-specificity RNA methyltransferase RlmN (364 aa).

Residue Glu-91 is the Proton acceptor of the active site. The Radical SAM core domain maps to 97 to 333 (ESDRGTLCIS…VTVRKTRGDD (237 aa)). The cysteines at positions 104 and 338 are disulfide-linked. [4Fe-4S] cluster is bound by residues Cys-111, Cys-115, and Cys-118. S-adenosyl-L-methionine contacts are provided by residues 164–165 (GE), Ser-196, 218–220 (SLH), and Asn-295. The active-site S-methylcysteine intermediate is Cys-338.

Belongs to the radical SAM superfamily. RlmN family. Requires [4Fe-4S] cluster as cofactor.

It is found in the cytoplasm. The enzyme catalyses adenosine(2503) in 23S rRNA + 2 reduced [2Fe-2S]-[ferredoxin] + 2 S-adenosyl-L-methionine = 2-methyladenosine(2503) in 23S rRNA + 5'-deoxyadenosine + L-methionine + 2 oxidized [2Fe-2S]-[ferredoxin] + S-adenosyl-L-homocysteine. The catalysed reaction is adenosine(37) in tRNA + 2 reduced [2Fe-2S]-[ferredoxin] + 2 S-adenosyl-L-methionine = 2-methyladenosine(37) in tRNA + 5'-deoxyadenosine + L-methionine + 2 oxidized [2Fe-2S]-[ferredoxin] + S-adenosyl-L-homocysteine. Its function is as follows. Specifically methylates position 2 of adenine 2503 in 23S rRNA and position 2 of adenine 37 in tRNAs. m2A2503 modification seems to play a crucial role in the proofreading step occurring at the peptidyl transferase center and thus would serve to optimize ribosomal fidelity. In Neisseria meningitidis serogroup B (strain ATCC BAA-335 / MC58), this protein is Dual-specificity RNA methyltransferase RlmN.